The following is an 894-amino-acid chain: DNA mismatch repair protein MutS (894 aa).

Residue 607–614 (GPNMSGKS) participates in ATP binding.

This sequence belongs to the DNA mismatch repair MutS family.

In terms of biological role, this protein is involved in the repair of mismatches in DNA. It is possible that it carries out the mismatch recognition step. This protein has a weak ATPase activity. This is DNA mismatch repair protein MutS from Bacillus cereus (strain ZK / E33L).